The sequence spans 359 residues: MAKQVLVELGERSYPIEIGQNLFSSSEPLARYLQNKNILIVTNETIAPLYLQQIEAMLSDFACVKPVILPDGEQYKTLEQMNTIFTSLLEQNLGRDTVLIALGGGVIGDMTGFAAASYQRGVDFIQIPTTLLSQVDSSVGGKTAVNHPLGKNMIGAFYQPKCVLIDTHCLSTLPKREFAAGMAEVIKYGVIWDAEFFQWLENNVEALKSLDTQALEYAISRCCEIKAEVVEKDETEQAVRALLNLGHTFGHAIEAEMGYGVWLHGEAVSAGTVLAAITSNKLGLVDESIVCRITALLAAFDLPTTAPDTMDFEQFIKHMRRDKKVLKGQLRLILPEGIGQAGIYSDVTDELLEEVISCA.

NAD(+) is bound by residues 71-76 (DGEQYK), 105-109 (GVIGD), 129-130 (TT), Lys142, Lys151, and 169-172 (CLST). Residues Glu184, His247, and His264 each coordinate Zn(2+).

Belongs to the sugar phosphate cyclases superfamily. Dehydroquinate synthase family. The cofactor is Co(2+). Zn(2+) serves as cofactor. It depends on NAD(+) as a cofactor.

The protein localises to the cytoplasm. It carries out the reaction 7-phospho-2-dehydro-3-deoxy-D-arabino-heptonate = 3-dehydroquinate + phosphate. It participates in metabolic intermediate biosynthesis; chorismate biosynthesis; chorismate from D-erythrose 4-phosphate and phosphoenolpyruvate: step 2/7. Its function is as follows. Catalyzes the conversion of 3-deoxy-D-arabino-heptulosonate 7-phosphate (DAHP) to dehydroquinate (DHQ). The polypeptide is 3-dehydroquinate synthase (Shewanella pealeana (strain ATCC 700345 / ANG-SQ1)).